A 140-amino-acid polypeptide reads, in one-letter code: Large ribosomal subunit protein bL17 (140 aa).

Residues 119 to 133 show a composition bias toward basic and acidic residues; that stretch reads DPSAKGAADRARLEE. The tract at residues 119–140 is disordered; it reads DPSAKGAADRARLEEEGGMTEE.

The protein belongs to the bacterial ribosomal protein bL17 family. Part of the 50S ribosomal subunit. Contacts protein L32.

In Maricaulis maris (strain MCS10) (Caulobacter maris), this protein is Large ribosomal subunit protein bL17.